Here is a 780-residue protein sequence, read N- to C-terminus: LPS-assembly protein LptD (780 aa).

Residues 1–24 (MKKRFPTLLATLIWTALYSQHTLA) form the signal peptide.

Belongs to the LptD family. In terms of assembly, component of the lipopolysaccharide transport and assembly complex. Interacts with LptE and LptA.

The protein localises to the cell outer membrane. Its function is as follows. Together with LptE, is involved in the assembly of lipopolysaccharide (LPS) at the surface of the outer membrane. The polypeptide is LPS-assembly protein LptD (Yersinia pseudotuberculosis serotype I (strain IP32953)).